Reading from the N-terminus, the 243-residue chain is 6-carboxyhexanoate--CoA ligase (243 aa).

The protein belongs to the BioW family. Homodimer. It depends on Mg(2+) as a cofactor.

It carries out the reaction heptanedioate + ATP + CoA = 6-carboxyhexanoyl-CoA + AMP + diphosphate. The protein operates within metabolic intermediate metabolism; pimeloyl-CoA biosynthesis; pimeloyl-CoA from pimelate: step 1/1. Its function is as follows. Catalyzes the transformation of pimelate into pimeloyl-CoA with concomitant hydrolysis of ATP to AMP. The polypeptide is 6-carboxyhexanoate--CoA ligase (Thermocrinis albus (strain DSM 14484 / JCM 11386 / HI 11/12)).